The chain runs to 200 residues: 3-isopropylmalate dehydratase small subunit (200 aa).

Belongs to the LeuD family. LeuD type 1 subfamily. As to quaternary structure, heterodimer of LeuC and LeuD.

It catalyses the reaction (2R,3S)-3-isopropylmalate = (2S)-2-isopropylmalate. Its pathway is amino-acid biosynthesis; L-leucine biosynthesis; L-leucine from 3-methyl-2-oxobutanoate: step 2/4. Catalyzes the isomerization between 2-isopropylmalate and 3-isopropylmalate, via the formation of 2-isopropylmaleate. The polypeptide is 3-isopropylmalate dehydratase small subunit (Actinobacillus pleuropneumoniae serotype 5b (strain L20)).